Here is a 303-residue protein sequence, read N- to C-terminus: Probable cell division protein WhiA (303 aa).

Positions 272–303 form a DNA-binding region, H-T-H motif; it reads SIQQVADALEFPITKSGVNHRLRKINKIADDL.

This sequence belongs to the WhiA family.

Its function is as follows. Involved in cell division and chromosome segregation. The chain is Probable cell division protein WhiA from Streptococcus pyogenes serotype M1.